We begin with the raw amino-acid sequence, 838 residues long: 1,4-alpha-glucan branching enzyme GlgB 1 (838 aa).

The segment covering 1-11 (MIPRPPSDDRA) has biased composition (basic and acidic residues). Disordered regions lie at residues 1 to 98 (MIPR…VSKK) and 116 to 142 (PVSP…SVLG). A compositionally biased stretch (low complexity) spans 29–57 (KKAAAAKKTAGKKATPAAKATAAKGAVTK). Asp-513 functions as the Nucleophile in the catalytic mechanism. Residue Glu-566 is the Proton donor of the active site. The tract at residues 793–822 (TDGARYGGSDVTNPHPVKPEPQGRHGRPAS) is disordered.

It belongs to the glycosyl hydrolase 13 family. GlgB subfamily. In terms of assembly, monomer.

The enzyme catalyses Transfers a segment of a (1-&gt;4)-alpha-D-glucan chain to a primary hydroxy group in a similar glucan chain.. The protein operates within glycan biosynthesis; glycogen biosynthesis. Functionally, catalyzes the formation of the alpha-1,6-glucosidic linkages in glycogen by scission of a 1,4-alpha-linked oligosaccharide from growing alpha-1,4-glucan chains and the subsequent attachment of the oligosaccharide to the alpha-1,6 position. This chain is 1,4-alpha-glucan branching enzyme GlgB 1, found in Streptomyces avermitilis (strain ATCC 31267 / DSM 46492 / JCM 5070 / NBRC 14893 / NCIMB 12804 / NRRL 8165 / MA-4680).